We begin with the raw amino-acid sequence, 277 residues long: Probable endonuclease 4 (277 aa).

Zn(2+) contacts are provided by His67, His107, Glu142, Asp176, His179, His211, Asp224, His226, and Glu256.

The protein belongs to the AP endonuclease 2 family. Zn(2+) is required as a cofactor.

It catalyses the reaction Endonucleolytic cleavage to 5'-phosphooligonucleotide end-products.. In terms of biological role, endonuclease IV plays a role in DNA repair. It cleaves phosphodiester bonds at apurinic or apyrimidinic (AP) sites, generating a 3'-hydroxyl group and a 5'-terminal sugar phosphate. This Akkermansia muciniphila (strain ATCC BAA-835 / DSM 22959 / JCM 33894 / BCRC 81048 / CCUG 64013 / CIP 107961 / Muc) protein is Probable endonuclease 4.